The primary structure comprises 221 residues: Very-long-chain (3R)-3-hydroxyacyl-CoA dehydratase PASTICCINO 2 (221 aa).

Residues 1-11 (MAGFLSVVRRV) lie on the Cytoplasmic side of the membrane. Residues 12–32 (YLTLYNWIVFAGWAQVLYLAI) form a helical membrane-spanning segment. Over 33–51 (TTLKETGYENVYDAIEKPL) the chain is Lumenal. The chain crosses the membrane as a helical span at residues 52-70 (QLAQTAAVLEILHGLVGLV). Over 71-76 (RSPVSA) the chain is Cytoplasmic. Residues 77 to 95 (TLPQIGSRLFLTWGILYSF) form a helical membrane-spanning segment. At 96-100 (PEVRS) the chain is on the lumenal side. A helical membrane pass occupies residues 101–122 (HFLVTSLVISWSITEIIRYSFF). The Cytoplasmic portion of the chain corresponds to 123-142 (GFKEALGFAPSWHLWLRYSS). A helical membrane pass occupies residues 143–165 (FLLLYPTGITSEVGLIYLALPHI). Catalysis depends on residues Tyr-147 and Glu-154. At 166–184 (KTSEMYSVRMPNILNFSFD) the chain is on the lumenal side. The helical transmembrane segment at 185–204 (FFYATILVLAIYVPGSPHMY) threads the bilayer. Residues 205–221 (RYMLGQRKRALSKSKRE) lie on the Cytoplasmic side of the membrane.

It belongs to the very long-chain fatty acids dehydratase HACD family. In terms of assembly, interacts with CDKA-1; but only with the 'Tyr-15' phosphorylated protein. Interacts with PAS1. Part of the fatty acid elongase complex which contains a beta-ketoacyl-CoA synthase (KCS), a beta-ketoacyl-CoA reductase (KCR), a beta-hydroxyacyl-CoA dehydratase (HCD) and an enoyl-CoA reductase (ECR). In terms of tissue distribution, high expression in young seedlings, roots, root tips, flowers and young siliques. Lower levels in leaves and stems.

The protein resides in the endoplasmic reticulum membrane. The protein localises to the cytoplasm. Its subcellular location is the nucleus. The catalysed reaction is a very-long-chain (3R)-3-hydroxyacyl-CoA = a very-long-chain (2E)-enoyl-CoA + H2O. It participates in lipid metabolism; fatty acid biosynthesis. Catalyzes the third of the four reactions of the long-chain fatty acids elongation cycle. This endoplasmic reticulum-bound enzymatic process, allows the addition of two carbons to the chain of long- and very long-chain fatty acids/VLCFAs per cycle. This enzyme catalyzes the dehydration of the 3-hydroxyacyl-CoA intermediate into trans-2,3-enoyl-CoA, within each cycle of fatty acid elongation. Thereby, it participates in the production of VLCFAs of different chain lengths that are involved in multiple biological processes as precursors of membrane lipids and lipid mediators. May be an anti-phosphatase that prevents CDKA-1 dephosphorylation and activation. Involved in the hormonal control of cell division and differentiation. Required for proliferation control of meristematic and non-meristematic cells. Negative regulator of the cell cycle. This Arabidopsis thaliana (Mouse-ear cress) protein is Very-long-chain (3R)-3-hydroxyacyl-CoA dehydratase PASTICCINO 2 (PAS2).